The sequence spans 409 residues: Casein kinase I isoform delta-B (409 aa).

A Protein kinase domain is found at 9 to 277; the sequence is YRLGRKIGSG…YLRQLFRNLF (269 aa). Residues 15-23 and Lys38 each bind ATP; that span reads IGSGSFGDI. Catalysis depends on Asp128, which acts as the Proton acceptor. Over residues 300 to 315 the composition is skewed to basic and acidic residues; it reads TAEEADRERRERDERM. The disordered stretch occupies residues 300-409; that stretch reads TAEEADRERR…NSIPFDHHGK (110 aa). Residues 317–341 are autoinhibitory; that stretch reads HSRNPAARGIPAASGRPRPTQDGAP. 2 stretches are compositionally biased toward polar residues: residues 346-358 and 380-402; these read TPTS…SSPR and NVSS…QNSI.

The protein belongs to the protein kinase superfamily. Monomer. Interacts with per1 and per2. Component of the circadian core oscillator. In terms of processing, autophosphorylated on serine and threonine residues.

The protein resides in the cytoplasm. It localises to the nucleus. The catalysed reaction is L-seryl-[protein] + ATP = O-phospho-L-seryl-[protein] + ADP + H(+). It carries out the reaction L-threonyl-[protein] + ATP = O-phospho-L-threonyl-[protein] + ADP + H(+). With respect to regulation, exhibits substrate-dependent heparin activation. Casein kinases are operationally defined by their preferential utilization of acidic proteins such as caseins as substrates. Central component of the circadian clock. May act as a negative regulator of circadian rhythmicity by phosphorylating per1 and per2, which may lead to their degradation. Participates in wnt signaling. The polypeptide is Casein kinase I isoform delta-B (csnk1db) (Danio rerio (Zebrafish)).